The primary structure comprises 122 residues: Large ribosomal subunit protein uL14 (122 aa).

This sequence belongs to the universal ribosomal protein uL14 family. As to quaternary structure, part of the 50S ribosomal subunit. Forms a cluster with proteins L3 and L19. In the 70S ribosome, L14 and L19 interact and together make contacts with the 16S rRNA in bridges B5 and B8.

In terms of biological role, binds to 23S rRNA. Forms part of two intersubunit bridges in the 70S ribosome. The sequence is that of Large ribosomal subunit protein uL14 from Methylobacterium radiotolerans (strain ATCC 27329 / DSM 1819 / JCM 2831 / NBRC 15690 / NCIMB 10815 / 0-1).